Consider the following 125-residue polypeptide: Transposase C from transposon PsiTn554 (125 aa).

The sequence is that of Transposase C from transposon PsiTn554 (tnpC) from Staphylococcus aureus.